A 395-amino-acid chain; its full sequence is S-adenosylmethionine synthase (395 aa).

ATP is bound at residue H16. D18 provides a ligand contact to Mg(2+). E44 lines the K(+) pocket. The L-methionine site is built by E57 and Q100. Positions 100–110 (QSPDIAQGVDR) are flexible loop. ATP is bound by residues 167–169 (DAK), 233–234 (RF), D242, 248–249 (RK), A265, and K269. An L-methionine-binding site is contributed by D242. K273 is an L-methionine binding site.

The protein belongs to the AdoMet synthase family. As to quaternary structure, homotetramer; dimer of dimers. Mg(2+) is required as a cofactor. It depends on K(+) as a cofactor.

It is found in the cytoplasm. It carries out the reaction L-methionine + ATP + H2O = S-adenosyl-L-methionine + phosphate + diphosphate. It functions in the pathway amino-acid biosynthesis; S-adenosyl-L-methionine biosynthesis; S-adenosyl-L-methionine from L-methionine: step 1/1. In terms of biological role, catalyzes the formation of S-adenosylmethionine (AdoMet) from methionine and ATP. The overall synthetic reaction is composed of two sequential steps, AdoMet formation and the subsequent tripolyphosphate hydrolysis which occurs prior to release of AdoMet from the enzyme. The protein is S-adenosylmethionine synthase of Paraburkholderia phymatum (strain DSM 17167 / CIP 108236 / LMG 21445 / STM815) (Burkholderia phymatum).